The following is a 121-amino-acid chain: uncharacterized protein (121 aa).

Residues 12–24 (EEGGASAAAPDAS) are compositionally biased toward low complexity. 2 disordered regions span residues 12-63 (EEGG…RLEP) and 101-121 (KKLA…SPVV). Residues 26–35 (KSKKGARPCF) are compositionally biased toward basic residues. A compositionally biased stretch (polar residues) spans 40–49 (QAGSCMTGRQ). Over residues 112-121 (GSQKERSPVV) the composition is skewed to basic and acidic residues.

This is an uncharacterized protein from Homo sapiens (Human).